Reading from the N-terminus, the 79-residue chain is Conotoxin ArMSGL-0123 (79 aa).

Residues 1 to 20 form the signal peptide; the sequence is MSRLGIMVLTLLLLVFIVTS. Positions 21–44 are excised as a propeptide; it reads HQDAGEKQATKRAAVNFRWRRSFT. 3 disulfides stabilise this stretch: Cys-52–Cys-64, Cys-56–Cys-73, and Cys-63–Cys-77. Leu-78 is subject to Leucine amide.

It belongs to the conotoxin O3 superfamily. Expressed by the venom duct.

The protein resides in the secreted. This is Conotoxin ArMSGL-0123 from Conus arenatus (Sand-dusted cone).